The sequence spans 209 residues: ATP-dependent Clp protease proteolytic subunit 2 (209 aa).

Residue S106 is the Nucleophile of the active site. Residue H131 is part of the active site.

The protein belongs to the peptidase S14 family. Fourteen ClpP subunits assemble into 2 heptameric rings which stack back to back to give a disk-like structure with a central cavity, resembling the structure of eukaryotic proteasomes.

It is found in the cytoplasm. The catalysed reaction is Hydrolysis of proteins to small peptides in the presence of ATP and magnesium. alpha-casein is the usual test substrate. In the absence of ATP, only oligopeptides shorter than five residues are hydrolyzed (such as succinyl-Leu-Tyr-|-NHMec, and Leu-Tyr-Leu-|-Tyr-Trp, in which cleavage of the -Tyr-|-Leu- and -Tyr-|-Trp bonds also occurs).. Its function is as follows. Cleaves peptides in various proteins in a process that requires ATP hydrolysis. Has a chymotrypsin-like activity. Plays a major role in the degradation of misfolded proteins. This chain is ATP-dependent Clp protease proteolytic subunit 2, found in Mesorhizobium japonicum (strain LMG 29417 / CECT 9101 / MAFF 303099) (Mesorhizobium loti (strain MAFF 303099)).